Here is a 234-residue protein sequence, read N- to C-terminus: Sugar fermentation stimulation protein homolog (234 aa).

This sequence belongs to the SfsA family.

In Shewanella sp. (strain ANA-3), this protein is Sugar fermentation stimulation protein homolog.